Here is a 554-residue protein sequence, read N- to C-terminus: HMG box-containing protein 4 (554 aa).

3 disordered regions span residues 14–34, 47–368, and 418–468; these read RGMEDVGLAAGRSQREKKRSY, QVRK…SAYQ, and HKQN…SPAK. The segment covering 117–127 has biased composition (polar residues); it reads TSPQVDTSTTH. Basic and acidic residues predominate over residues 221–230; sequence TGREETESRS. Residues 242 to 255 show a composition bias toward polar residues; it reads PRSGGTPDSASSTG. Residues 272-300 show a composition bias toward basic residues; the sequence is MKKKKKSKKSKKKKDKHKDEKHRKHSKSK. The span at 317–335 shows a compositional bias: pro residues; the sequence is LPSPPPPTATTPTSPPSVP. Over residues 342–358 the composition is skewed to basic and acidic residues; that stretch reads HAEEQLDKKKKKEDPEK. The segment at residues 360–428 is a DNA-binding region (HMG box); the sequence is KKKNMSAYQV…KQNKAEATTV (69 aa). A compositionally biased stretch (low complexity) spans 434 to 466; that stretch reads SSESAARSKGSSSGLPSPNKKSPTSVVSFSTSP.

Interacts with nlk.2.

The protein resides in the nucleus. Functionally, negatively regulates Wnt/beta-catenin signaling during development. In Xenopus tropicalis (Western clawed frog), this protein is HMG box-containing protein 4 (hmgxb4).